The primary structure comprises 572 residues: Receptor-type adenylate cyclase GRESAG 4.2 (572 aa).

Residues 1 to 225 (RKTLLTFGLN…PNGNALTPAQ (225 aa)) are Extracellular-facing. 3 N-linked (GlcNAc...) asparagine glycosylation sites follow: Asn-10, Asn-77, and Asn-152. Residues 226–251 (LDWCGWCRFACADTGSRLTVFLCCIM) form a helical membrane-spanning segment. The Cytoplasmic segment spans residues 252–572 (RNKRDNDNAP…TVRRLSVALQ (321 aa)). The Guanylate cyclase domain maps to 269 to 424 (TLIFTDIESS…QTANTAARTE (156 aa)). 2 residues coordinate Mg(2+): Asp-274 and Asp-317.

Belongs to the adenylyl cyclase class-3 family. It depends on Mg(2+) as a cofactor.

It is found in the cell membrane. It carries out the reaction ATP = 3',5'-cyclic AMP + diphosphate. Functionally, could act as a receptor for an unknown ligand. The polypeptide is Receptor-type adenylate cyclase GRESAG 4.2 (GRESAG 4.2) (Trypanosoma brucei brucei).